The sequence spans 2867 residues: Reticulocyte-binding protein 2 (2867 aa).

The signal sequence occupies residues 1–21 (MEKNVLWVIFYNFLVILLASC). Residues 22–2805 (NDSNRSKSNS…TAKEAIGKTR (2784 aa)) are Extracellular-facing. 3 disordered regions span residues 52-73 (KYNN…NNHN), 2650-2682 (ETKT…ASVP), and 2712-2799 (DNTH…TAKE). Low complexity predominate over residues 61–73 (NIGNQINNDNNHN). Over residues 2659-2674 (KAKEEKVPPKETENRA) the composition is skewed to basic and acidic residues. Polar residues predominate over residues 2725–2736 (DSISAPQEQVEY). Over residues 2743-2754 (ENDETTEEESEH) the composition is skewed to acidic residues. Residues 2755 to 2799 (DDAHDDTHDDTHDDTHDDTHDDTHDDTHDDTHDESQTGRDSTAKE) show a composition bias toward basic and acidic residues. A run of 7 repeats spans residues 2758 to 2761 (HDDT), 2762 to 2765 (HDDT), 2766 to 2769 (HDDT), 2770 to 2773 (HDDT), 2774 to 2777 (HDDT), 2778 to 2781 (HDDT), and 2782 to 2785 (HDDT). Positions 2758 to 2785 (HDDTHDDTHDDTHDDTHDDTHDDTHDDT) are 7 X 4 AA tandem repeats of H-D-D-T. The helical transmembrane segment at 2806–2826 (LAGAVIIAMSVLSGFIIIVFK) threads the bilayer. Over 2827 to 2867 (DKDEEEKDHNEHGYNEAFGEHDEYNMHDKEEVIEVCFNEED) the chain is Cytoplasmic.

Its subcellular location is the cell membrane. In terms of biological role, involved in reticulocyte adhesion. Specifically binds to human reticulocyte cells. This Plasmodium vivax (strain Belem) protein is Reticulocyte-binding protein 2 (RBP-2).